The following is a 602-amino-acid chain: Trichothecene efflux pump TRI12 (602 aa).

A run of 4 helical transmembrane segments spans residues 49–69 (LTLL…SFII), 77–97 (NVSL…LLMG), 107–127 (GFIL…LYSF), and 134–154 (IGAQ…ILFI). Residue Asn-160 is glycosylated (N-linked (GlcNAc...) asparagine). Transmembrane regions (helical) follow at residues 164 to 184 (FLGN…GPYI), 196 to 216 (WIFY…FIFY), 240 to 260 (WIGA…VSWG), 271 to 291 (ILGL…YECY), 297 to 317 (PIIP…MLLI), 355 to 375 (STAG…FHIF), 380 to 400 (WQLI…ASVN), 408 to 428 (IAFS…TMLL), 450 to 470 (AICG…KFPG), 484 to 504 (WGFP…LTGQ), and 532 to 552 (AAAY…AIIA). An N-linked (GlcNAc...) asparagine glycan is attached at Asn-590.

This sequence belongs to the major facilitator superfamily.

It localises to the cell membrane. In terms of biological role, efflux pump that provides the dual role of trichothecene export and self-protection by allowing the fungus to evade the harmful effect of its own trichothecene production. The sequence is that of Trichothecene efflux pump TRI12 from Trichoderma arundinaceum.